The following is a 448-amino-acid chain: Probable cytosolic Fe-S cluster assembly factor Bm6838 (448 aa).

[4Fe-4S] cluster is bound by residues Cys27, Cys66, Cys69, Cys72, Cys170, Cys226, Cys370, and Cys374.

The protein belongs to the NARF family.

Component of the cytosolic iron-sulfur (Fe/S) protein assembly machinery. Required for maturation of extramitochondrial Fe/S proteins. In Brugia malayi (Filarial nematode worm), this protein is Probable cytosolic Fe-S cluster assembly factor Bm6838.